A 517-amino-acid chain; its full sequence is Bifunctional purine biosynthesis protein PurH (517 aa).

The 146-residue stretch at 1–146 (MAPIALLSVS…KNHAHVAVLT (146 aa)) folds into the MGS-like domain.

This sequence belongs to the PurH family.

It carries out the reaction (6R)-10-formyltetrahydrofolate + 5-amino-1-(5-phospho-beta-D-ribosyl)imidazole-4-carboxamide = 5-formamido-1-(5-phospho-D-ribosyl)imidazole-4-carboxamide + (6S)-5,6,7,8-tetrahydrofolate. The catalysed reaction is IMP + H2O = 5-formamido-1-(5-phospho-D-ribosyl)imidazole-4-carboxamide. The protein operates within purine metabolism; IMP biosynthesis via de novo pathway; 5-formamido-1-(5-phospho-D-ribosyl)imidazole-4-carboxamide from 5-amino-1-(5-phospho-D-ribosyl)imidazole-4-carboxamide (10-formyl THF route): step 1/1. It participates in purine metabolism; IMP biosynthesis via de novo pathway; IMP from 5-formamido-1-(5-phospho-D-ribosyl)imidazole-4-carboxamide: step 1/1. The sequence is that of Bifunctional purine biosynthesis protein PurH from Prochlorococcus marinus (strain MIT 9303).